We begin with the raw amino-acid sequence, 234 residues long: Glucosamine-6-phosphate deaminase (234 aa).

Asp62 acts as the Proton acceptor; for enolization step in catalysis. Asn128 acts as the For ring-opening step in catalysis. The active-site Proton acceptor; for ring-opening step is His130. The active-site For ring-opening step is the Glu135.

It belongs to the glucosamine/galactosamine-6-phosphate isomerase family. NagB subfamily.

The enzyme catalyses alpha-D-glucosamine 6-phosphate + H2O = beta-D-fructose 6-phosphate + NH4(+). It participates in amino-sugar metabolism; N-acetylneuraminate degradation; D-fructose 6-phosphate from N-acetylneuraminate: step 5/5. In terms of biological role, catalyzes the reversible isomerization-deamination of glucosamine 6-phosphate (GlcN6P) to form fructose 6-phosphate (Fru6P) and ammonium ion. The sequence is that of Glucosamine-6-phosphate deaminase from Streptococcus pyogenes serotype M18 (strain MGAS8232).